The chain runs to 419 residues: Hyaluronan synthase (419 aa).

Transmembrane regions (helical) follow at residues 8 to 28 (LIVL…MYLF), 33 to 53 (VGIY…LSFL), 318 to 338 (IVAL…VAIG), 345 to 365 (AIQL…IVAL), and 376 to 396 (PASF…LQPL).

It belongs to the NodC/HAS family. Mg(2+) is required as a cofactor.

Its subcellular location is the cell membrane. The enzyme catalyses [hyaluronan](n) + UDP-N-acetyl-alpha-D-glucosamine = N-acetyl-beta-D-glucosaminyl-(1-&gt;4)-[hyaluronan](n) + UDP + H(+). The catalysed reaction is N-acetyl-beta-D-glucosaminyl-(1-&gt;4)-[hyaluronan](n) + UDP-alpha-D-glucuronate = [hyaluronan](n+1) + UDP + H(+). Its pathway is glycan biosynthesis; hyaluronan biosynthesis. Its function is as follows. Glycosaminoglycan synthesis. The hyaluronic acid capsule is involved in the pathogenicity of group A Streptococci; it may be the major virulence determinant. In Streptococcus pyogenes serotype M18 (strain MGAS8232), this protein is Hyaluronan synthase (hasA).